A 501-amino-acid polypeptide reads, in one-letter code: 2,3-bisphosphoglycerate-independent phosphoglycerate mutase (501 aa).

Mn(2+) is bound by residues Asp12 and Ser62. Ser62 (phosphoserine intermediate) is an active-site residue. Substrate-binding positions include His121, 150-151, Arg182, Arg188, 253-256, and Lys322; these read RD and RSDR. Residues Asp389, His393, Asp430, His431, and His449 each contribute to the Mn(2+) site.

It belongs to the BPG-independent phosphoglycerate mutase family. Monomer. Mn(2+) serves as cofactor.

The enzyme catalyses (2R)-2-phosphoglycerate = (2R)-3-phosphoglycerate. The protein operates within carbohydrate degradation; glycolysis; pyruvate from D-glyceraldehyde 3-phosphate: step 3/5. In terms of biological role, catalyzes the interconversion of 2-phosphoglycerate and 3-phosphoglycerate. The chain is 2,3-bisphosphoglycerate-independent phosphoglycerate mutase from Ehrlichia ruminantium (strain Welgevonden).